We begin with the raw amino-acid sequence, 69 residues long: Conotoxin Lt5.10 (69 aa).

An N-terminal signal peptide occupies residues 1–19 (MLCLPVFIILLLLASPAAP). Residues 20-54 (KSLETRIQNDLIRAGLTDADLKTEKGFLSGLLNVA) constitute a propeptide that is removed on maturation.

It belongs to the conotoxin T superfamily. In terms of processing, contains 2 disulfide bonds that can be either 'C1-C3, C2-C4' or 'C1-C4, C2-C3', since these disulfide connectivities have been observed for conotoxins with cysteine framework V (for examples, see AC P0DQQ7 and AC P81755). Expressed by the venom duct.

It localises to the secreted. This chain is Conotoxin Lt5.10, found in Conus litteratus (Lettered cone).